Consider the following 87-residue polypeptide: Phosphoribosyl-ATP pyrophosphatase (87 aa).

This sequence belongs to the PRA-PH family.

The protein localises to the cytoplasm. It carries out the reaction 1-(5-phospho-beta-D-ribosyl)-ATP + H2O = 1-(5-phospho-beta-D-ribosyl)-5'-AMP + diphosphate + H(+). Its pathway is amino-acid biosynthesis; L-histidine biosynthesis; L-histidine from 5-phospho-alpha-D-ribose 1-diphosphate: step 2/9. The polypeptide is Phosphoribosyl-ATP pyrophosphatase (Leifsonia xyli subsp. xyli (strain CTCB07)).